Reading from the N-terminus, the 159-residue chain is Globin-like protein (159 aa).

The region spanning Met1 to Lys152 is the Globin domain. His101 lines the heme pocket.

Belongs to the globin family. As to quaternary structure, homodimer. In terms of tissue distribution, expressed mainly in a subset of neuronal cells and in head muscular tissue.

Its subcellular location is the cytoplasm. May be a globin and may play a role in oxygen transport. The chain is Globin-like protein (glb-1) from Caenorhabditis elegans.